Consider the following 327-residue polypeptide: Phenylalanine--tRNA ligase alpha subunit (327 aa).

Glu252 lines the Mg(2+) pocket.

Belongs to the class-II aminoacyl-tRNA synthetase family. Phe-tRNA synthetase alpha subunit type 1 subfamily. As to quaternary structure, tetramer of two alpha and two beta subunits. The cofactor is Mg(2+).

Its subcellular location is the cytoplasm. It catalyses the reaction tRNA(Phe) + L-phenylalanine + ATP = L-phenylalanyl-tRNA(Phe) + AMP + diphosphate + H(+). This is Phenylalanine--tRNA ligase alpha subunit from Escherichia coli O139:H28 (strain E24377A / ETEC).